A 273-amino-acid polypeptide reads, in one-letter code: Type II methyltransferase M2.MboI (273 aa).

The protein belongs to the N(4)/N(6)-methyltransferase family.

It carries out the reaction a 2'-deoxyadenosine in DNA + S-adenosyl-L-methionine = an N(6)-methyl-2'-deoxyadenosine in DNA + S-adenosyl-L-homocysteine + H(+). In terms of biological role, a beta subtype methylase that recognizes the double-stranded sequence 5'-GATC-3', methylates A-2 on both strands, and protects the DNA from cleavage by the MboI endonuclease. This seems to be a weaker methylase than M1.MboI. This chain is Type II methyltransferase M2.MboI (mboIBM), found in Moraxella bovis.